A 623-amino-acid polypeptide reads, in one-letter code: Zona pellucida sperm-binding protein 1 (623 aa).

The N-terminal stretch at 1–20 is a signal peptide; it reads MAWGCFVVLLLLAAAPLRLG. Residue Gln21 is modified to Pyrrolidone carboxylic acid. Residues 21–590 lie on the Extracellular side of the membrane; the sequence is QRLHLEPGFE…GSSRNSSSRM (570 aa). N-linked (GlcNAc...) asparagine glycosylation is found at Asn49 and Asn68. The interval 182 to 201 is disordered; the sequence is IHPTPAPPSLGPGPAGSTVP. The P-type domain occupies 226 to 266; that stretch reads ERCQVASGHIPCMVNGSSKETCQQAGCCYDSTKEEPCYYGN. Intrachain disulfides connect Cys228/Cys253, Cys237/Cys252, and Cys247/Cys262. Asn240 is a glycosylation site (N-linked (GlcNAc...) asparagine). The region spanning 271-542 is the ZP domain; sequence QCFKSGYFTL…DTCSTTCDSG (272 aa). An N-linked (GlcNAc...) asparagine glycan is attached at Asn371. The cysteines at positions 449 and 470 are disulfide-linked. Residues 547–623 constitute a propeptide, removed in mature form; it reads RRSSGHHNIT…AQKLWEGIRY (77 aa). N-linked (GlcNAc...) asparagine glycans are attached at residues Asn554 and Asn585. Residues 591-611 form a helical membrane-spanning segment; it reads LLLLLAITLALAAGIFVGLIW. At 612–623 the chain is on the cytoplasmic side; it reads AWAQKLWEGIRY.

The protein belongs to the ZP domain family. ZPB subfamily. As to quaternary structure, polymers of ZP2 and ZP3 organized into long filaments cross-linked by ZP1 homodimers. Interacts with ZP3. In terms of processing, proteolytically cleaved before the transmembrane segment to yield the secreted ectodomain incorporated in the zona pellucida. Post-translationally, O-glycosylated. As to expression, expressed in oocytes.

Its subcellular location is the zona pellucida. It is found in the cell membrane. Its function is as follows. Component of the zona pellucida, an extracellular matrix surrounding oocytes which mediates sperm binding, induction of the acrosome reaction and prevents post-fertilization polyspermy. The zona pellucida is composed of 3 to 4 glycoproteins, ZP1, ZP2, ZP3, and ZP4. ZP1 ensures the structural integrity of the zona pellucida. The protein is Zona pellucida sperm-binding protein 1 (Zp1) of Mus musculus (Mouse).